The primary structure comprises 70 residues: uncharacterized protein (70 aa).

Residues 15 to 37 form a helical membrane-spanning segment; sequence IFAFLLFRLCKFCCVFCCALCNV.

It is found in the membrane. This is an uncharacterized protein from Dictyostelium discoideum (Social amoeba).